Consider the following 829-residue polypeptide: Periplasmic nitrate reductase (829 aa).

Residues 1 to 29 constitute a signal peptide (tat-type signal); the sequence is MKMTRRAFVKANAAASAAAVAGVTLPASA. Residues 41–97 enclose the 4Fe-4S Mo/W bis-MGD-type domain; it reads IKWDKAPCRFCGTGCSVLVGTQNGRVVATQGDPEAPVNKGLNCIKGYFLSKIMYGKD. The [4Fe-4S] cluster site is built by Cys-48, Cys-51, Cys-55, and Cys-83. Mo-bis(molybdopterin guanine dinucleotide) is bound by residues Lys-85, Gln-152, Asn-177, Cys-181, 214-221, 245-249, 264-266, Met-374, Gln-378, Asn-484, 510-511, Lys-533, Asp-560, and 718-727; these read WGSNMAEM, STYYH, QSD, SD, and TGRVLEHWHT. Phe-794 is a substrate binding site. Mo-bis(molybdopterin guanine dinucleotide) contacts are provided by Asn-802 and Lys-819.

The protein belongs to the prokaryotic molybdopterin-containing oxidoreductase family. NasA/NapA/NarB subfamily. Component of the periplasmic nitrate reductase NapAB complex composed of NapA and NapB. The cofactor is [4Fe-4S] cluster. It depends on Mo-bis(molybdopterin guanine dinucleotide) as a cofactor. Predicted to be exported by the Tat system. The position of the signal peptide cleavage has not been experimentally proven.

The protein localises to the periplasm. The enzyme catalyses 2 Fe(II)-[cytochrome] + nitrate + 2 H(+) = 2 Fe(III)-[cytochrome] + nitrite + H2O. In terms of biological role, catalytic subunit of the periplasmic nitrate reductase complex NapAB. Receives electrons from NapB and catalyzes the reduction of nitrate to nitrite. The protein is Periplasmic nitrate reductase of Aliivibrio fischeri (strain MJ11) (Vibrio fischeri).